A 519-amino-acid polypeptide reads, in one-letter code: Cytochrome P450 52A13 (519 aa).

C466 lines the heme pocket.

It belongs to the cytochrome P450 family. Heme is required as a cofactor.

Its subcellular location is the membrane. Together with an NADPH cytochrome P450 the enzyme system catalyzes the terminal hydroxylation as the first step in the assimilation of alkanes and fatty acids. The polypeptide is Cytochrome P450 52A13 (CYP52A13) (Debaryomyces hansenii (Yeast)).